We begin with the raw amino-acid sequence, 237 residues long: Opacity protein opA57 (237 aa).

A1 is a signal peptide.

The protein belongs to the opacity porin family.

Its subcellular location is the cell outer membrane. In terms of biological role, implicated in a number of adherence functions. OPA proteins are implicated in pathogenesis and are subject to phase variation. The chain is Opacity protein opA57 (opaK) from Neisseria gonorrhoeae.